Here is a 393-residue protein sequence, read N- to C-terminus: Formate-dependent phosphoribosylglycinamide formyltransferase (393 aa).

Residues 22–23 (EL) and Glu82 each bind N(1)-(5-phospho-beta-D-ribosyl)glycinamide. ATP-binding positions include Arg114, Lys155, 160–165 (SSGKGQ), 195–198 (EGFI), and Glu203. One can recognise an ATP-grasp domain in the interval 119 to 308 (RLAAEELGLP…EFALHARAIL (190 aa)). The Mg(2+) site is built by Glu267 and Glu279. N(1)-(5-phospho-beta-D-ribosyl)glycinamide contacts are provided by residues Asp286, Lys356, and 363–364 (RR).

It belongs to the PurK/PurT family. As to quaternary structure, homodimer.

It carries out the reaction N(1)-(5-phospho-beta-D-ribosyl)glycinamide + formate + ATP = N(2)-formyl-N(1)-(5-phospho-beta-D-ribosyl)glycinamide + ADP + phosphate + H(+). It participates in purine metabolism; IMP biosynthesis via de novo pathway; N(2)-formyl-N(1)-(5-phospho-D-ribosyl)glycinamide from N(1)-(5-phospho-D-ribosyl)glycinamide (formate route): step 1/1. Involved in the de novo purine biosynthesis. Catalyzes the transfer of formate to 5-phospho-ribosyl-glycinamide (GAR), producing 5-phospho-ribosyl-N-formylglycinamide (FGAR). Formate is provided by PurU via hydrolysis of 10-formyl-tetrahydrofolate. The protein is Formate-dependent phosphoribosylglycinamide formyltransferase of Stutzerimonas stutzeri (strain A1501) (Pseudomonas stutzeri).